We begin with the raw amino-acid sequence, 165 residues long: CDP-archaeol synthase (165 aa).

4 consecutive transmembrane segments (helical) span residues 41–61 (GLIC…WLVG), 72–92 (ILSV…KSFI), 103–123 (AWPV…TIIF), and 127–147 (WFFA…TPVL).

It belongs to the CDP-archaeol synthase family. Requires Mg(2+) as cofactor.

It is found in the cell membrane. It carries out the reaction 2,3-bis-O-(geranylgeranyl)-sn-glycerol 1-phosphate + CTP + H(+) = CDP-2,3-bis-O-(geranylgeranyl)-sn-glycerol + diphosphate. It participates in membrane lipid metabolism; glycerophospholipid metabolism. Its function is as follows. Catalyzes the formation of CDP-2,3-bis-(O-geranylgeranyl)-sn-glycerol (CDP-archaeol) from 2,3-bis-(O-geranylgeranyl)-sn-glycerol 1-phosphate (DGGGP) and CTP. This reaction is the third ether-bond-formation step in the biosynthesis of archaeal membrane lipids. This chain is CDP-archaeol synthase, found in Methanoregula boonei (strain DSM 21154 / JCM 14090 / 6A8).